The sequence spans 436 residues: mRNA cap guanine-N(7) methyltransferase (436 aa).

Positions 1–50 (MSTKPEKPIWMSQEDYDRQYGSITGDESSTVSKKDSKVTANAPGDGNGSL) are disordered. The mRNA cap 0 methyltransferase domain maps to 141 to 424 (SPIIKLRNFN…FYTMFAFRKV (284 aa)). 150 to 151 (NN) is an mRNA binding site. S-adenosyl-L-methionine-binding residues include K154, G172, D194, D223, Q249, and Y254.

Belongs to the class I-like SAM-binding methyltransferase superfamily. mRNA cap 0 methyltransferase family.

The protein resides in the nucleus. The enzyme catalyses a 5'-end (5'-triphosphoguanosine)-ribonucleoside in mRNA + S-adenosyl-L-methionine = a 5'-end (N(7)-methyl 5'-triphosphoguanosine)-ribonucleoside in mRNA + S-adenosyl-L-homocysteine. Its function is as follows. Responsible for methylating the 5'-cap structure of mRNAs. This chain is mRNA cap guanine-N(7) methyltransferase (ABD1), found in Saccharomyces cerevisiae (strain ATCC 204508 / S288c) (Baker's yeast).